The following is a 203-amino-acid chain: Histone deacetylase HDT4 (203 aa).

The segment at 2-5 (EFWG) is required to repress transcription. The segment at 121–203 (AALPQNEINP…PFPCGPSCKK (83 aa)) is disordered. Residues 129–157 (NPEEDDESDSDEMGLDEDDDSSDEEDVEA) show a composition bias toward acidic residues. A compositionally biased stretch (basic residues) spans 180–193 (GGKKNKSSGGKKRC).

The protein belongs to the histone deacetylase HD2 family. Confined to stems and flowers with young siliques.

The protein resides in the nucleus. The protein localises to the nucleolus. In terms of biological role, probably mediates the deacetylation of lysine residues lysine residues on the N-terminal part of the core histones (H2A, H2B, H3 and H4). Histone deacetylation gives a tag for epigenetic repression and plays an important role in transcriptional regulation, cell cycle progression and developmental events. The sequence is that of Histone deacetylase HDT4 (HDT4) from Arabidopsis thaliana (Mouse-ear cress).